The chain runs to 1196 residues: Nucleolar protein 6 (1196 aa).

Disordered regions lie at residues Met-1–Pro-75 and Lys-1140–Lys-1196. Residues His-22–His-31 are compositionally biased toward basic and acidic residues. The segment covering Lys-1165 to Gly-1174 has biased composition (basic residues).

It belongs to the NRAP family. Part of the small subunit (SSU) processome, composed of more than 70 proteins and the RNA chaperone small nucleolar RNA (snoRNA) U3.

The protein resides in the nucleus. It localises to the nucleolus. It is found in the chromosome. Functionally, part of the small subunit (SSU) processome, first precursor of the small eukaryotic ribosomal subunit. During the assembly of the SSU processome in the nucleolus, many ribosome biogenesis factors, an RNA chaperone and ribosomal proteins associate with the nascent pre-rRNA and work in concert to generate RNA folding, modifications, rearrangements and cleavage as well as targeted degradation of pre-ribosomal RNA by the RNA exosome. The protein is Nucleolar protein 6 of Drosophila sechellia (Fruit fly).